Reading from the N-terminus, the 664-residue chain is Methionine--tRNA ligase (664 aa).

Residues 15 to 25 carry the 'HIGH' region motif; the sequence is YYPSGKLHIGH. The 'KMSKS' region motif lies at 311–315; that stretch reads KMSKS. Lysine 314 is a binding site for ATP. The tract at residues 536–556 is disordered; sequence MQGSAPAKEETKEEEPQEVDR. A tRNA-binding domain is found at 570–662; sequence LRVAEVIEAE…IDQSLPKGTR (93 aa).

It belongs to the class-I aminoacyl-tRNA synthetase family. MetG type 2B subfamily. In terms of assembly, homodimer.

Its subcellular location is the cytoplasm. It catalyses the reaction tRNA(Met) + L-methionine + ATP = L-methionyl-tRNA(Met) + AMP + diphosphate. In terms of biological role, is required not only for elongation of protein synthesis but also for the initiation of all mRNA translation through initiator tRNA(fMet) aminoacylation. This chain is Methionine--tRNA ligase (metG), found in Bacillus subtilis (strain 168).